Reading from the N-terminus, the 185-residue chain is HTH-type transcriptional regulator SAB2452 (185 aa).

The HTH tetR-type domain occupies 6–66 (IENRQRIEEI…YVIQRDLNTF (61 aa)). Residues 29–48 (SMNRIAKELGIGMGTLYRHF) constitute a DNA-binding region (H-T-H motif).

This chain is HTH-type transcriptional regulator SAB2452, found in Staphylococcus aureus (strain bovine RF122 / ET3-1).